The following is a 163-amino-acid chain: Carbon monoxide dehydrogenase small chain (163 aa).

Residues K4–L80 form the 2Fe-2S ferredoxin-type domain. [2Fe-2S] cluster-binding residues include C42, C47, C50, C62, C101, C104, C136, and C138.

Dimer of heterotrimers. Each heterotrimer consists of a large, a medium and a small subunit. It depends on [2Fe-2S] cluster as a cofactor.

The enzyme catalyses CO + a quinone + H2O = a quinol + CO2. Catalyzes the oxidation of carbon monoxide to carbon dioxide. This Hydrogenophaga pseudoflava (Pseudomonas carboxydoflava) protein is Carbon monoxide dehydrogenase small chain (cutS).